The sequence spans 379 residues: Succinyl-diaminopimelate desuccinylase (379 aa).

His-70 provides a ligand contact to Zn(2+). Asp-72 is an active-site residue. Asp-103 serves as a coordination point for Zn(2+). The active-site Proton acceptor is the Glu-137. Residues Glu-138, Glu-166, and His-352 each coordinate Zn(2+).

The protein belongs to the peptidase M20A family. DapE subfamily. In terms of assembly, homodimer. It depends on Zn(2+) as a cofactor. Co(2+) is required as a cofactor.

It carries out the reaction N-succinyl-(2S,6S)-2,6-diaminopimelate + H2O = (2S,6S)-2,6-diaminopimelate + succinate. It functions in the pathway amino-acid biosynthesis; L-lysine biosynthesis via DAP pathway; LL-2,6-diaminopimelate from (S)-tetrahydrodipicolinate (succinylase route): step 3/3. Catalyzes the hydrolysis of N-succinyl-L,L-diaminopimelic acid (SDAP), forming succinate and LL-2,6-diaminopimelate (DAP), an intermediate involved in the bacterial biosynthesis of lysine and meso-diaminopimelic acid, an essential component of bacterial cell walls. In Burkholderia ambifaria (strain MC40-6), this protein is Succinyl-diaminopimelate desuccinylase.